Reading from the N-terminus, the 1416-residue chain is DNA-directed RNA polymerase subunit beta' (1416 aa).

Residues Cys71, Cys73, Cys86, and Cys89 each coordinate Zn(2+). Mg(2+) is bound by residues Asp461, Asp463, and Asp465. Residues Cys815, Cys889, Cys896, and Cys899 each contribute to the Zn(2+) site.

Belongs to the RNA polymerase beta' chain family. In terms of assembly, the RNAP catalytic core consists of 2 alpha, 1 beta, 1 beta' and 1 omega subunit. When a sigma factor is associated with the core the holoenzyme is formed, which can initiate transcription. Mg(2+) is required as a cofactor. Zn(2+) serves as cofactor.

It catalyses the reaction RNA(n) + a ribonucleoside 5'-triphosphate = RNA(n+1) + diphosphate. In terms of biological role, DNA-dependent RNA polymerase catalyzes the transcription of DNA into RNA using the four ribonucleoside triphosphates as substrates. This chain is DNA-directed RNA polymerase subunit beta', found in Haemophilus influenzae (strain PittGG).